The sequence spans 331 residues: tRNA (guanine-N(1)-)-methyltransferase (331 aa).

Composition is skewed to low complexity over residues 77–99 and 107–134; these read GSDT…QATR and AQPG…GRAA. The interval 77–137 is disordered; the sequence is GSDTTARSGS…PGAGRAASSR (61 aa). Residues glycine 169 and 193-198 contribute to the S-adenosyl-L-methionine site; that span reads LGDYVL. The tract at residues 312 to 331 is disordered; sequence WQRCSPAPSEQAPEGARDMA.

It belongs to the RNA methyltransferase TrmD family. In terms of assembly, homodimer.

It is found in the cytoplasm. The enzyme catalyses guanosine(37) in tRNA + S-adenosyl-L-methionine = N(1)-methylguanosine(37) in tRNA + S-adenosyl-L-homocysteine + H(+). In terms of biological role, specifically methylates guanosine-37 in various tRNAs. This Kocuria rhizophila (strain ATCC 9341 / DSM 348 / NBRC 103217 / DC2201) protein is tRNA (guanine-N(1)-)-methyltransferase.